The sequence spans 157 residues: UPF0225 protein PSPPH_1399 (157 aa).

The protein belongs to the UPF0225 family.

This chain is UPF0225 protein PSPPH_1399, found in Pseudomonas savastanoi pv. phaseolicola (strain 1448A / Race 6) (Pseudomonas syringae pv. phaseolicola (strain 1448A / Race 6)).